Reading from the N-terminus, the 139-residue chain is Centromere protein S (139 aa).

Residues 99–139 are disordered; that stretch reads ELASSNMEQKEKKKKKSSAAKGRKTEENETPVTESEDSNMA. The span at 110-120 shows a compositional bias: basic residues; it reads KKKKKSSAAKG.

The protein belongs to the TAF9 family. CENP-S/MHF1 subfamily. Heterodimer with CENPX, sometimes called MHF; this interaction stabilizes both partners. MHF heterodimers can assemble to form tetrameric structures. MHF also coassemble with CENPT-CENPW heterodimers at centromeres to form the tetrameric CENP-T-W-S-X complex. Forms a discrete complex with FANCM and CENPX, called FANCM-MHF; this interaction, probably mediated by direct binding between CENPS and FANCM, leads to synergistic activation of double-stranded DNA binding and strongly stimulates FANCM-mediated DNA remodeling. Recruited by FANCM to the Fanconi anemia (FA) core complex, which consists of CENPS, CENPX, FANCA, FANCB, FANCC, FANCE, FANCF, FANCG, FANCL, FANCM, FAAP24 and FAAP100. The FA core complex associates with Bloom syndrome (BLM) complex, which consists of at least BLM, DNA topoisomerase 3-alpha (TOP3A), RMI1/BLAP75, RPA1/RPA70 and RPA2/RPA32. The super complex between FA and BLM is called BRAFT. Component of the CENPA-CAD complex, composed of CENPI, CENPK, CENPL, CENPO, CENPP, CENPQ, CENPR and CENPS. The CENPA-CAD complex is probably recruited on centromeres by the CENPA-NAC complex, at least composed of CENPA, CENPC, CENPH, CENPM, CENPN, CENPT and CENPU.

It localises to the nucleus. Its subcellular location is the chromosome. The protein resides in the centromere. It is found in the kinetochore. DNA-binding component of the Fanconi anemia (FA) core complex. Required for the normal activation of the FA pathway, leading to monoubiquitination of the FANCI-FANCD2 complex in response to DNA damage, cellular resistance to DNA cross-linking drugs, and prevention of chromosomal breakage. In complex with CENPX (MHF heterodimer), crucial cofactor for FANCM in both binding and ATP-dependent remodeling of DNA. Stabilizes FANCM. In complex with CENPX and FANCM (but not other FANC proteins), rapidly recruited to blocked forks and promotes gene conversion at blocked replication forks. In complex with CENPT, CENPW and CENPX (CENP-T-W-S-X heterotetramer), involved in the formation of a functional kinetochore outer plate, which is essential for kinetochore-microtubule attachment and faithful mitotic progression. As a component of MHF and CENP-T-W-S-X complexes, binds DNA and bends it to form a nucleosome-like structure. DNA-binding function is fulfilled in the presence of CENPX, with the following preference for DNA substates: Holliday junction &gt; double-stranded &gt; splay arm &gt; single-stranded. Does not bind DNA on its own. The protein is Centromere protein S (CENPS) of Gallus gallus (Chicken).